The primary structure comprises 397 residues: Acetate kinase 1 (397 aa).

N8 provides a ligand contact to Mg(2+). K15 contributes to the ATP binding site. R89 contributes to the substrate binding site. The Proton donor/acceptor role is filled by D146. ATP is bound by residues 206-210 (HLGNG), 281-283 (DLR), and 329-333 (GIGEN). E382 provides a ligand contact to Mg(2+).

This sequence belongs to the acetokinase family. In terms of assembly, homodimer. The cofactor is Mg(2+). Requires Mn(2+) as cofactor.

Its subcellular location is the cytoplasm. It catalyses the reaction acetate + ATP = acetyl phosphate + ADP. The protein operates within metabolic intermediate biosynthesis; acetyl-CoA biosynthesis; acetyl-CoA from acetate: step 1/2. Catalyzes the formation of acetyl phosphate from acetate and ATP. Can also catalyze the reverse reaction. The sequence is that of Acetate kinase 1 from Listeria innocua serovar 6a (strain ATCC BAA-680 / CLIP 11262).